The sequence spans 486 residues: Bifunctional protein HldE (486 aa).

A ribokinase region spans residues 1–331 (MAEHDDGDLI…VDAVKPASGA (331 aa)). 208–211 (NRRE) contributes to the ATP binding site. Asp277 is a catalytic residue. Residues 357–486 (FTNGCFDLLH…TTATVTRLRS (130 aa)) are cytidylyltransferase.

It in the N-terminal section; belongs to the carbohydrate kinase PfkB family. In the C-terminal section; belongs to the cytidylyltransferase family. Homodimer.

The enzyme catalyses D-glycero-beta-D-manno-heptose 7-phosphate + ATP = D-glycero-beta-D-manno-heptose 1,7-bisphosphate + ADP + H(+). It catalyses the reaction D-glycero-beta-D-manno-heptose 1-phosphate + ATP + H(+) = ADP-D-glycero-beta-D-manno-heptose + diphosphate. Its pathway is nucleotide-sugar biosynthesis; ADP-L-glycero-beta-D-manno-heptose biosynthesis; ADP-L-glycero-beta-D-manno-heptose from D-glycero-beta-D-manno-heptose 7-phosphate: step 1/4. The protein operates within nucleotide-sugar biosynthesis; ADP-L-glycero-beta-D-manno-heptose biosynthesis; ADP-L-glycero-beta-D-manno-heptose from D-glycero-beta-D-manno-heptose 7-phosphate: step 3/4. Catalyzes the phosphorylation of D-glycero-D-manno-heptose 7-phosphate at the C-1 position to selectively form D-glycero-beta-D-manno-heptose-1,7-bisphosphate. In terms of biological role, catalyzes the ADP transfer from ATP to D-glycero-beta-D-manno-heptose 1-phosphate, yielding ADP-D-glycero-beta-D-manno-heptose. The polypeptide is Bifunctional protein HldE (Acidiphilium cryptum (strain JF-5)).